Reading from the N-terminus, the 669-residue chain is DNA ligase (669 aa).

NAD(+) is bound by residues 33–37, 82–83, and E115; these read DLTYD and SL. K117 serves as the catalytic N6-AMP-lysine intermediate. The NAD(+) site is built by R138, E172, K286, and K310. Positions 401, 404, 417, and 422 each coordinate Zn(2+).

It belongs to the NAD-dependent DNA ligase family. LigA subfamily. Mg(2+) is required as a cofactor. Mn(2+) serves as cofactor.

The catalysed reaction is NAD(+) + (deoxyribonucleotide)n-3'-hydroxyl + 5'-phospho-(deoxyribonucleotide)m = (deoxyribonucleotide)n+m + AMP + beta-nicotinamide D-nucleotide.. In terms of biological role, DNA ligase that catalyzes the formation of phosphodiester linkages between 5'-phosphoryl and 3'-hydroxyl groups in double-stranded DNA using NAD as a coenzyme and as the energy source for the reaction. It is essential for DNA replication and repair of damaged DNA. This is DNA ligase from Borrelia hermsii (strain HS1 / DAH).